Reading from the N-terminus, the 352-residue chain is N-acetyl-gamma-glutamyl-phosphate reductase (352 aa).

The protein belongs to the NAGSA dehydrogenase family. Type 1 subfamily.

The protein localises to the cytoplasm. It carries out the reaction N-acetyl-L-glutamate 5-semialdehyde + phosphate + NADP(+) = N-acetyl-L-glutamyl 5-phosphate + NADPH + H(+). Its pathway is amino-acid biosynthesis; L-arginine biosynthesis; N(2)-acetyl-L-ornithine from L-glutamate: step 3/4. In terms of biological role, catalyzes the NADPH-dependent reduction of N-acetyl-5-glutamyl phosphate to yield N-acetyl-L-glutamate 5-semialdehyde. This chain is N-acetyl-gamma-glutamyl-phosphate reductase, found in Nostoc ellipsosporum.